Here is a 232-residue protein sequence, read N- to C-terminus: Large ribosomal subunit protein uL1 (232 aa).

This sequence belongs to the universal ribosomal protein uL1 family. In terms of assembly, part of the 50S ribosomal subunit.

Its function is as follows. Binds directly to 23S rRNA. The L1 stalk is quite mobile in the ribosome, and is involved in E site tRNA release. In terms of biological role, protein L1 is also a translational repressor protein, it controls the translation of the L11 operon by binding to its mRNA. This is Large ribosomal subunit protein uL1 from Levilactobacillus brevis (strain ATCC 367 / BCRC 12310 / CIP 105137 / JCM 1170 / LMG 11437 / NCIMB 947 / NCTC 947) (Lactobacillus brevis).